A 213-amino-acid chain; its full sequence is Andrastin A biosynthesis cluster protein B (213 aa).

In terms of biological role, part of the gene cluster that mediates the biosynthesis of andrastins, meroterpenoid compounds that exhibit inhibitory activity against ras farnesyltransferase, suggesting that they could be promising leads for antitumor agents. The first step of the pathway is the synthesis of 3,5-dimethylorsellinic acid (DMOA) by the polyketide synthase adrD via condensation of one acetyl-CoA starter unit with 3 malonyl-CoA units and 2 methylations. DMAO is then converted to farnesyl-DMAO by the prenyltransferase adrG. The methyltransferase adrK catalyzes the methylation of the carboxyl group of farnesyl-DMAO to farnesyl-DMAO methyl ester which is further converted to epoxyfarnesyl-DMAO methyl ester by the FAD-dependent monooxygenase adrH. The terpene cyclase adrI then catalyzes the carbon skeletal rearrangement to generate the andrastin E, the first compound in the pathway having the andrastin scaffold, with the tetracyclic ring system. The post-cyclization tailoring enzymes adrF, adrE, adrJ, and adrA, are involved in the conversion of andrastin E into andrastin A. The short chain dehydrogenase adrF is responsible for the oxidation of the C-3 a hydroxyl group of andrastin E to yield the corresponding ketone, andrastin D. The ketoreductase adrE stereoselectively reduces the carbonyl moiety to reverse the stereochemistry of the C-3 position to yield andrastin F. The acetyltransferase adrJ is the acetyltransferase that attaches the acetyl group to the C-3 hydroxyl group of andrastin F to yield andrastin C. Finally, the cytochrome P450 monooxygenase adrA catalyzes two sequential oxidation reactions of the C-23 methyl group, to generate the corresponding alcohol andrastin B, and aldehyde andrastin A. This Penicillium rubens (strain ATCC 28089 / DSM 1075 / NRRL 1951 / Wisconsin 54-1255) (Penicillium chrysogenum) protein is Andrastin A biosynthesis cluster protein B.